The chain runs to 97 residues: Putative pterin-4-alpha-carbinolamine dehydratase (97 aa).

It belongs to the pterin-4-alpha-carbinolamine dehydratase family.

The enzyme catalyses (4aS,6R)-4a-hydroxy-L-erythro-5,6,7,8-tetrahydrobiopterin = (6R)-L-erythro-6,7-dihydrobiopterin + H2O. This Cyanothece sp. (strain PCC 7425 / ATCC 29141) protein is Putative pterin-4-alpha-carbinolamine dehydratase.